The chain runs to 321 residues: RNA/RNP complex-1-interacting phosphatase (321 aa).

Basic residues predominate over residues 1–11 (MNQHYGRHGRG). Residues 1-27 (MNQHYGRHGRGRGRDFAACAPPKKKGR) form a disordered region. One can recognise a Tyrosine-protein phosphatase domain in the interval 60–207 (FEAKLMPEEC…LQKRHVRKNR (148 aa)). The active-site Phosphocysteine intermediate is Cys151. 152–157 (THGLNR) serves as a coordination point for substrate. Residue Arg157 is the Proton donor/acceptor of the active site. The disordered stretch occupies residues 205–262 (KNRNVSAPRTDGLEDSADPTEQVYTNNKPVKKKPRKNRRGGHLAPSQHFQHQTQSSPY). A compositionally biased stretch (basic residues) spans 233–245 (PVKKKPRKNRRGG). Over residues 251 to 262 (QHFQHQTQSSPY) the composition is skewed to polar residues.

The protein belongs to the protein-tyrosine phosphatase family. Non-receptor class dual specificity subfamily. Monomer. May interact with SFRS7 and SFRS9/SRP30C.

The protein resides in the nucleus. It localises to the nucleus speckle. In terms of biological role, possesses RNA 5'-triphosphatase and diphosphatase activities, but displays a poor protein-tyrosine phosphatase activity. In addition, has phosphatase activity with ATP, ADP and O-methylfluorescein phosphate (in vitro). Binds to RNA. May participate in nuclear mRNA metabolism. The protein is RNA/RNP complex-1-interacting phosphatase (Dusp11) of Mus musculus (Mouse).